A 404-amino-acid chain; its full sequence is MSPSDVPINWKRNLTVTWLGCFLTGAAFSLVMPFLPLYVEQLGVTGHSALNMWSGLVFSITFLFSAIASPFWGGLADRKGRKIMLLRSALGMAIVMLLMGMAQNIWQFLILRALLGLLGGFIPNANALIATQVPRNKSGWALGTLSTGGVSGALLGPLAGGLLADHYGLRPVFFITASVLFICFLLTFFFIRENFQPVSKKEMLHVREVVASLKNPRLVLSLFVTTLIIQVATGSIAPILTLYVRELAGNVSNIAFISGMIASVPGVAALLSAPRLGKLGDRIGPEKILIVALIISVLLLIPMSFVQTPWQLALLRFLLGAADGALLPAVQTLLVYNSTNQIAGRIFSYNQSFRDIGNVTGPLMGAAISASYGFRAVFCVTAGVVLFNAIYSWNSLQRRRLATE.

A run of 11 helical transmembrane segments spans residues 19–39 (LGCFLTGAAFSLVMPFLPLYV), 56–76 (LVFSITFLFSAIASPFWGGLA), 90–110 (LGMAIVMLLMGMAQNIWQFLI), 113–133 (ALLGLLGGFIPNANALIATQV), 144–164 (TLSTGGVSGALLGPLAGGLLA), 171–191 (PVFFITASVLFICFLLTFFFI), 222–242 (LFVTTLIIQVATGSIAPILTL), 254–274 (IAFISGMIASVPGVAALLSAP), 288–308 (ILIVALIISVLLLIPMSFVQT), 317–337 (FLLGAADGALLPAVQTLLVYN), and 376–396 (AVFCVTAGVVLFNAIYSWNSL).

This sequence belongs to the major facilitator superfamily. DHA1 family. MdtG (TC 2.A.1.2.20) subfamily.

The protein localises to the cell inner membrane. The chain is Multidrug resistance protein MdtG from Salmonella arizonae (strain ATCC BAA-731 / CDC346-86 / RSK2980).